The chain runs to 268 residues: Hemin import ATP-binding protein HmuV (268 aa).

Residues 5–241 enclose the ABC transporter domain; the sequence is LKAEAASFAL…ELIADVFDVA (237 aa). 37–44 lines the ATP pocket; the sequence is GPNGAGKS.

The protein belongs to the ABC transporter superfamily. Heme (hemin) importer (TC 3.A.1.14.5) family. As to quaternary structure, the complex is composed of two ATP-binding proteins (HmuV), two transmembrane proteins (HmuU) and a solute-binding protein (HmuT).

The protein resides in the cell inner membrane. In terms of biological role, part of the ABC transporter complex HmuTUV involved in hemin import. Responsible for energy coupling to the transport system. The chain is Hemin import ATP-binding protein HmuV from Rhodopseudomonas palustris (strain ATCC BAA-98 / CGA009).